We begin with the raw amino-acid sequence, 574 residues long: Alpha-mannosidase I MNS5 (574 aa).

Residues 1–9 are Cytoplasmic-facing; that stretch reads MSCPIHPRR. The helical; Signal-anchor for type II membrane protein transmembrane segment at 10–26 threads the bilayer; it reads LFLCLLISLTFFVVDPS. The Lumenal segment spans residues 27–574; that stretch reads SQHIEVKKKQ…VGYCGLWNPL (548 aa). Residues Asn-89, Asn-107, and Asn-121 are each glycosylated (N-linked (GlcNAc...) asparagine). The active-site Proton donor is Glu-134. Residue Asn-201 is glycosylated (N-linked (GlcNAc...) asparagine). Residue Asp-274 is part of the active site. N-linked (GlcNAc...) asparagine glycosylation is present at Asn-349. Catalysis depends on Glu-367, which acts as the Proton donor. The active site involves Glu-388. Position 471 (Thr-471) interacts with Ca(2+). An N-linked (GlcNAc...) asparagine glycan is attached at Asn-494.

This sequence belongs to the glycosyl hydrolase 47 family. Ca(2+) serves as cofactor.

It localises to the endoplasmic reticulum membrane. It functions in the pathway protein modification; protein glycosylation. Functionally, can convert Man(9)GlcNAc(2) and Man(8)GlcNAc(2) into N-glycans with a terminal alpha-1,6-linked Man residue in the C-branch. Functions in the formation of unique N-glycan structures that are specifically recognized by components of the endoplasmic reticulum-associated degradation (ERAD) machinery, which leads to the degradation of misfolded glycoproteins. Most likely generates N-glycan signal on misfolded glycoproteins that is subsequently recognized by OS9. Required for ERAD of the heavily glycosylated and misfolded BRI1 variants BRI1-5 and BRI1-9. Does not seem to play role in N-glycan processing of correctly folded proteins destined for secretion. This chain is Alpha-mannosidase I MNS5 (MNS5), found in Arabidopsis thaliana (Mouse-ear cress).